An 866-amino-acid polypeptide reads, in one-letter code: Rifampicin phosphotransferase (866 aa).

The interval 1-313 (MSSLVLGLHE…FYIVQSRPIT (313 aa)) is ATP-binding. ATP contacts are provided by K22, R116, G131, T135, Q182, E296, Q308, and R310. Residues 326–754 (NHVYISVGHQ…TSDGEIVTGE (429 aa)) form a rifampicin-binding region. The tract at residues 410–429 (IPNDKTAPNPSRGNADMPAQ) is disordered. Residues 767–865 (GLPVSSGVIE…VHGTEGYIEI (99 aa)) form a swivel phosphohistidine region. The active-site Tele-phosphohistidine intermediate is H825.

This sequence belongs to the rifampicin phosphotransferase family.

It catalyses the reaction rifampicin + ATP + H2O = 21-phosphorifampicin + AMP + phosphate + 2 H(+). Functionally, catalyzes the phosphorylation of rifampicin, also known as rifampin (RIF), leading to its inactivation. The sequence is that of Rifampicin phosphotransferase from Bacillus subtilis (strain 168).